We begin with the raw amino-acid sequence, 204 residues long: Recombination protein RecR (204 aa).

The C4-type zinc-finger motif lies at 58-75 (CSVCQNVTDREEDPCSIC). One can recognise a Toprim domain in the interval 83-181 (TVICVVESPV…EVTKIARGIP (99 aa)).

The protein belongs to the RecR family.

Its function is as follows. May play a role in DNA repair. It seems to be involved in an RecBC-independent recombinational process of DNA repair. It may act with RecF and RecO. This Chlorobium luteolum (strain DSM 273 / BCRC 81028 / 2530) (Pelodictyon luteolum) protein is Recombination protein RecR.